Reading from the N-terminus, the 149-residue chain is Gonadotropin subunit beta-2 (149 aa).

The signal sequence occupies residues 1-24 (MARIPECTILLLLCMCVLAVPAQC). Intrachain disulfides connect cysteine 30–cysteine 78, cysteine 44–cysteine 93, cysteine 47–cysteine 131, cysteine 55–cysteine 109, cysteine 59–cysteine 111, and cysteine 114–cysteine 121. Asparagine 34 is a glycosylation site (N-linked (GlcNAc...) asparagine).

Belongs to the glycoprotein hormones subunit beta family. Heterodimer of an alpha and a beta chain.

It is found in the secreted. Its function is as follows. Involved in gametogenesis and steroidogenesis. In Clupea pallasii (Pacific herring), this protein is Gonadotropin subunit beta-2 (cgbb).